A 67-amino-acid chain; its full sequence is Small ribosomal subunit protein bS21 (67 aa).

It belongs to the bacterial ribosomal protein bS21 family.

This Desulfovibrio desulfuricans (strain ATCC 27774 / DSM 6949 / MB) protein is Small ribosomal subunit protein bS21.